The sequence spans 344 residues: GDSL esterase/lipase At1g73610 (344 aa).

The signal sequence occupies residues M1–A24. A glycan (N-linked (GlcNAc...) asparagine) is linked at N30. The Nucleophile role is filled by S42. Active-site residues include D319 and H322.

The protein belongs to the 'GDSL' lipolytic enzyme family.

The protein localises to the secreted. The sequence is that of GDSL esterase/lipase At1g73610 from Arabidopsis thaliana (Mouse-ear cress).